Reading from the N-terminus, the 573-residue chain is MSQSWPAADIARMILDGFDDYREHFRQITDGARQRFEQAQWQQAQKASAARINLYEEKVGETVARLHQAFSTESLMDVSQWPLVKSAYISLIDLRFDDELSETWYNSIFCGLFSHDLISDGCMFIHTTRPSLRRARAAQTRSYKPQGELATMLEQVFADYRFSEDYADLPGDLRRLEAQLRENLPDWVCKDPELTLELFSSVLYRNKGAYLVGRIFTHEEQWPLVIPLLHREGRGIQIDALITDEADVSIIFSFTRSYFMVDVPVPAEFIGFLKRILPGKHIAELYTSIGFYKHGKSEFYRALINHLASTDDRFIMAPGVRGMVMSVFTLPGFNTVFKIIKDRFSPSKNVDRATVIEKYRLVKSVDRVGRMADTQEFADFRFPLSKFDPACLEELLEVAPSTVAVEGQTVLIRHCWTERRMTPLNLYLEHANEAQVREALEDYGLAIKQLAAANIFPGDMLLKNFGVTRHGRVVFYDYDEICFLTEANFRHIPAPRTPEDEMASEPWYSIGPHDVFPEEFPPFLFADAGQRKLFDQLHGELYNADYWKGLQEAIRAGKVIDVFPYRRQGLEDE.

ATP contacts are provided by residues 317–323 (APGVRGM) and K338. D373 is an active-site residue.

It belongs to the AceK family.

It localises to the cytoplasm. It catalyses the reaction L-seryl-[isocitrate dehydrogenase] + ATP = O-phospho-L-seryl-[isocitrate dehydrogenase] + ADP + H(+). Functionally, bifunctional enzyme which can phosphorylate or dephosphorylate isocitrate dehydrogenase (IDH) on a specific serine residue. This is a regulatory mechanism which enables bacteria to bypass the Krebs cycle via the glyoxylate shunt in response to the source of carbon. When bacteria are grown on glucose, IDH is fully active and unphosphorylated, but when grown on acetate or ethanol, the activity of IDH declines drastically concomitant with its phosphorylation. This Pseudomonas fluorescens (strain ATCC BAA-477 / NRRL B-23932 / Pf-5) protein is Isocitrate dehydrogenase kinase/phosphatase.